The following is a 384-amino-acid chain: GDSL esterase/lipase At1g71691 (384 aa).

The first 27 residues, 1–27 (MAFHFRRLCFFSALLAVVLQLLHGVSG), serve as a signal peptide directing secretion. The Nucleophile role is filled by serine 62. Residues aspartate 348 and histidine 351 contribute to the active site.

This sequence belongs to the 'GDSL' lipolytic enzyme family.

It localises to the secreted. The chain is GDSL esterase/lipase At1g71691 from Arabidopsis thaliana (Mouse-ear cress).